A 348-amino-acid polypeptide reads, in one-letter code: uncharacterized protein (348 aa).

WD repeat units lie at residues 59–98 (GFQG…VVYS), 142–182 (GHTD…LIQT), 185–226 (DNLG…LLGT), 229–267 (QQPG…ELFS), 270–309 (GPSL…QVTT), and 312–347 (GHQG…SALA).

This is an uncharacterized protein from Synechocystis sp. (strain ATCC 27184 / PCC 6803 / Kazusa).